Consider the following 883-residue polypeptide: Phosphoenolpyruvate carboxylase (883 aa).

Active-site residues include His-138 and Lys-546.

The protein belongs to the PEPCase type 1 family. Mg(2+) is required as a cofactor.

It carries out the reaction oxaloacetate + phosphate = phosphoenolpyruvate + hydrogencarbonate. In terms of biological role, forms oxaloacetate, a four-carbon dicarboxylic acid source for the tricarboxylic acid cycle. This Escherichia fergusonii (strain ATCC 35469 / DSM 13698 / CCUG 18766 / IAM 14443 / JCM 21226 / LMG 7866 / NBRC 102419 / NCTC 12128 / CDC 0568-73) protein is Phosphoenolpyruvate carboxylase.